Reading from the N-terminus, the 309-residue chain is Probable lipid kinase YegS-like (309 aa).

A DAGKc domain is found at 1 to 134; that stretch reads MAPSHWRLIL…VDLLRIDAEH (134 aa). ATP is bound by residues Thr39, 65–71, and Thr96; that span reads GDGTLSE. Mg(2+) is bound by residues Val219, Asp222, and Leu224. Catalysis depends on Glu280, which acts as the Proton acceptor.

Belongs to the diacylglycerol/lipid kinase family. YegS lipid kinase subfamily. The cofactor is Mg(2+). Ca(2+) is required as a cofactor.

It is found in the cytoplasm. Functionally, probably phosphorylates lipids; the in vivo substrate is unknown. The polypeptide is Probable lipid kinase YegS-like (Xanthomonas oryzae pv. oryzae (strain MAFF 311018)).